We begin with the raw amino-acid sequence, 154 residues long: CASP-like protein ARALYDRAFT_485429 (154 aa).

Topologically, residues 1–12 (MENVPGSFGTSA) are cytoplasmic. Residues 13–33 (SFALRFGQTIFSAASLIFMCF) form a helical membrane-spanning segment. Over 34 to 41 (DYDFYDFT) the chain is Extracellular. Residues 42–62 (TFCYLATVMAIVTPWSILLAL) form a helical membrane-spanning segment. At 63-81 (TDTYSVLVKLLPQELRVLS) the chain is on the cytoplasmic side. The helical transmembrane segment at 82–102 (IVFAGDFVLSFLSLGGACAVA) threads the bilayer. At 103 to 128 (SATELLASADGKICDGNLCIQYQVSA) the chain is on the extracellular side. The helical transmembrane segment at 129-149 (ALAFLCWFLLLASALFNFWSL) threads the bilayer. The Cytoplasmic segment spans residues 150–154 (PSLYY).

Belongs to the Casparian strip membrane proteins (CASP) family. As to quaternary structure, homodimer and heterodimers.

It is found in the cell membrane. This Arabidopsis lyrata subsp. lyrata (Lyre-leaved rock-cress) protein is CASP-like protein ARALYDRAFT_485429.